The primary structure comprises 146 residues: Mite group 2 allergen Der f 2 (146 aa).

The N-terminal stretch at 1–17 (MISKILCLSLLVAAVVA) is a signal peptide. Cystine bridges form between C25–C136, C38–C44, and C90–C95.

This sequence belongs to the NPC2 family.

It is found in the secreted. This chain is Mite group 2 allergen Der f 2 (DERF2), found in Dermatophagoides farinae (American house dust mite).